Consider the following 2005-residue polypeptide: Structural maintenance of chromosomes flexible hinge domain-containing protein 1 (2005 aa).

Residues 1 to 13 (MAAADGGGPGGAS) show a composition bias toward gly residues. The disordered stretch occupies residues 1–23 (MAAADGGGPGGASVGTEEDGGGV). Position 2 is an N-acetylalanine (A2). The segment at 111–702 (TKERIDFLPH…LSVTWPEGDE (592 aa)) is ATPase activity domain. Position 1349 is an N6-acetyllysine (K1349). Glycyl lysine isopeptide (Lys-Gly) (interchain with G-Cter in SUMO2) cross-links involve residues K1374 and K1496. T1499 carries the phosphothreonine modification. In terms of domain architecture, SMC hinge spans 1720–1847 (GDVLGKIAHL…DNLDAANHYR (128 aa)). At K1802 the chain carries N6-succinyllysine. At S1974 the chain carries Phosphoserine.

This sequence belongs to the SMC family. Highly divergent. Homodimer; homodimerizes via its SMC hinge domain. Interacts with LRIF1. Sumoylated with SUMO1.

Its subcellular location is the chromosome. It catalyses the reaction ATP + H2O = ADP + phosphate + H(+). Its function is as follows. Non-canonical member of the structural maintenance of chromosomes (SMC) protein family that plays a key role in epigenetic silencing by regulating chromatin architecture. Promotes heterochromatin formation in both autosomes and chromosome X, probably by mediating the merge of chromatin compartments. Plays a key role in chromosome X inactivation in females by promoting the spreading of heterochromatin. Recruited to inactivated chromosome X by Xist RNA and acts by mediating the merge of chromatin compartments: promotes random chromatin interactions that span the boundaries of existing structures, leading to create a compartment-less architecture typical of inactivated chromosome X. Required to facilitate Xist RNA spreading. Also required for silencing of a subset of clustered autosomal loci in somatic cells, such as the DUX4 locus. Has ATPase activity; may participate in structural manipulation of chromatin in an ATP-dependent manner as part of its role in gene expression regulation. Also plays a role in DNA repair: localizes to sites of DNA double-strand breaks in response to DNA damage to promote the repair of DNA double-strand breaks. Acts by promoting non-homologous end joining (NHEJ) and inhibiting homologous recombination (HR) repair. The protein is Structural maintenance of chromosomes flexible hinge domain-containing protein 1 of Homo sapiens (Human).